A 98-amino-acid polypeptide reads, in one-letter code: Co-chaperonin GroES 5 (98 aa).

This sequence belongs to the GroES chaperonin family. In terms of assembly, heptamer of 7 subunits arranged in a ring. Interacts with the chaperonin GroEL.

It is found in the cytoplasm. Functionally, together with the chaperonin GroEL, plays an essential role in assisting protein folding. The GroEL-GroES system forms a nano-cage that allows encapsulation of the non-native substrate proteins and provides a physical environment optimized to promote and accelerate protein folding. GroES binds to the apical surface of the GroEL ring, thereby capping the opening of the GroEL channel. The sequence is that of Co-chaperonin GroES 5 from Mesorhizobium japonicum (strain LMG 29417 / CECT 9101 / MAFF 303099) (Mesorhizobium loti (strain MAFF 303099)).